The chain runs to 278 residues: Membrane protein insertase YidC 2 (278 aa).

The N-terminal stretch at 1–18 (MHKRLFITLLGFIILLAG) is a signal peptide. Residue cysteine 19 is the site of N-palmitoyl cysteine attachment. Cysteine 19 carries the S-diacylglycerol cysteine lipid modification. The next 4 membrane-spanning stretches (helical) occupy residues 55–75 (GFAIISIVLIVRFILLPFMLI), 132–152 (MLGCLPVLIQMPILMGLYMSL), 176–196 (LIMTIIAAIMYFVQPLVNSIH), and 224–244 (AAALGLYWSISAAFLIVQMHF).

Belongs to the OXA1/ALB3/YidC family. Type 2 subfamily.

The protein localises to the cell membrane. Required for the insertion and/or proper folding and/or complex formation of integral membrane proteins into the membrane. Involved in integration of membrane proteins that insert both dependently and independently of the Sec translocase complex, as well as at least some lipoproteins. The sequence is that of Membrane protein insertase YidC 2 from Staphylococcus epidermidis (strain ATCC 12228 / FDA PCI 1200).